The chain runs to 464 residues: ATP-dependent protease ATPase subunit HslU (464 aa).

ATP-binding positions include Val18, 60 to 65 (GVGKTE), Asp277, Glu342, and Arg414.

The protein belongs to the ClpX chaperone family. HslU subfamily. As to quaternary structure, a double ring-shaped homohexamer of HslV is capped on each side by a ring-shaped HslU homohexamer. The assembly of the HslU/HslV complex is dependent on binding of ATP.

The protein resides in the cytoplasm. Its function is as follows. ATPase subunit of a proteasome-like degradation complex; this subunit has chaperone activity. The binding of ATP and its subsequent hydrolysis by HslU are essential for unfolding of protein substrates subsequently hydrolyzed by HslV. HslU recognizes the N-terminal part of its protein substrates and unfolds these before they are guided to HslV for hydrolysis. This chain is ATP-dependent protease ATPase subunit HslU, found in Lactobacillus leichmannii.